A 241-amino-acid polypeptide reads, in one-letter code: Demethylmenaquinone methyltransferase (241 aa).

Residues Thr-68, Asp-88, and 114–115 (DA) each bind S-adenosyl-L-methionine.

It belongs to the class I-like SAM-binding methyltransferase superfamily. MenG/UbiE family.

It carries out the reaction a 2-demethylmenaquinol + S-adenosyl-L-methionine = a menaquinol + S-adenosyl-L-homocysteine + H(+). It participates in quinol/quinone metabolism; menaquinone biosynthesis; menaquinol from 1,4-dihydroxy-2-naphthoate: step 2/2. Functionally, methyltransferase required for the conversion of demethylmenaquinol (DMKH2) to menaquinol (MKH2). This chain is Demethylmenaquinone methyltransferase, found in Deinococcus radiodurans (strain ATCC 13939 / DSM 20539 / JCM 16871 / CCUG 27074 / LMG 4051 / NBRC 15346 / NCIMB 9279 / VKM B-1422 / R1).